The primary structure comprises 192 residues: Fe/S biogenesis protein NfuA (192 aa).

The [4Fe-4S] cluster site is built by Cys-149 and Cys-152.

Belongs to the NfuA family. In terms of assembly, homodimer. [4Fe-4S] cluster is required as a cofactor.

Functionally, involved in iron-sulfur cluster biogenesis. Binds a 4Fe-4S cluster, can transfer this cluster to apoproteins, and thereby intervenes in the maturation of Fe/S proteins. Could also act as a scaffold/chaperone for damaged Fe/S proteins. This is Fe/S biogenesis protein NfuA from Shewanella amazonensis (strain ATCC BAA-1098 / SB2B).